Reading from the N-terminus, the 305-residue chain is Protoheme IX farnesyltransferase (305 aa).

Transmembrane regions (helical) follow at residues 28-48 (IIEL…QGVP), 52-72 (LVLL…ALNM), 101-121 (LAFG…TVNW), 122-142 (LSAW…TMIL), 149-169 (NIVW…SSVT), 174-194 (WAPV…YWPL), 218-238 (VVAR…LLLT), 240-260 (LGYT…FWLW), and 283-303 (LFHW…VDPF).

It belongs to the UbiA prenyltransferase family. Protoheme IX farnesyltransferase subfamily.

Its subcellular location is the cell membrane. It catalyses the reaction heme b + (2E,6E)-farnesyl diphosphate + H2O = Fe(II)-heme o + diphosphate. It participates in porphyrin-containing compound metabolism; heme O biosynthesis; heme O from protoheme: step 1/1. Functionally, converts heme B (protoheme IX) to heme O by substitution of the vinyl group on carbon 2 of heme B porphyrin ring with a hydroxyethyl farnesyl side group. This chain is Protoheme IX farnesyltransferase, found in Streptomyces avermitilis (strain ATCC 31267 / DSM 46492 / JCM 5070 / NBRC 14893 / NCIMB 12804 / NRRL 8165 / MA-4680).